Here is a 131-residue protein sequence, read N- to C-terminus: Large ribosomal subunit protein eL32 (131 aa).

Residues 39 to 77 (LGEKWRRPKGRHSKMRRKLKSKPKMPNPGYGSPKKVRGL) are disordered. Residues 44 to 61 (RRPKGRHSKMRRKLKSKP) are compositionally biased toward basic residues.

It belongs to the eukaryotic ribosomal protein eL32 family.

This chain is Large ribosomal subunit protein eL32 (rpl32), found in Methanopyrus kandleri (strain AV19 / DSM 6324 / JCM 9639 / NBRC 100938).